The primary structure comprises 143 residues: Putative transmembrane protein ORF32 (143 aa).

Helical transmembrane passes span 20–42 and 52–74; these read GISG…SFTL and WPLI…EGGV.

It is found in the host membrane. The chain is Putative transmembrane protein ORF32 from Haloarcula hispanica (His1V).